The sequence spans 286 residues: Bifunctional protein FolD (286 aa).

Residues 166 to 168 (GRS) and S191 each bind NADP(+).

The protein belongs to the tetrahydrofolate dehydrogenase/cyclohydrolase family. In terms of assembly, homodimer.

It carries out the reaction (6R)-5,10-methylene-5,6,7,8-tetrahydrofolate + NADP(+) = (6R)-5,10-methenyltetrahydrofolate + NADPH. The enzyme catalyses (6R)-5,10-methenyltetrahydrofolate + H2O = (6R)-10-formyltetrahydrofolate + H(+). The protein operates within one-carbon metabolism; tetrahydrofolate interconversion. In terms of biological role, catalyzes the oxidation of 5,10-methylenetetrahydrofolate to 5,10-methenyltetrahydrofolate and then the hydrolysis of 5,10-methenyltetrahydrofolate to 10-formyltetrahydrofolate. This is Bifunctional protein FolD from Lactiplantibacillus plantarum (strain ATCC BAA-793 / NCIMB 8826 / WCFS1) (Lactobacillus plantarum).